We begin with the raw amino-acid sequence, 495 residues long: Loline biosynthesis cluster 1 transcription factor lolU1 (495 aa).

It is found in the nucleus. Its function is as follows. Transcriptional regulator that may regulate the expression of the loline biosynthesis cluster 1, one of the 2 clusters involved in the biosynthesis of loline alkaloids, potent insecticidal agents composed of a pyrrolizidine ring system and an uncommon ether bridge linking carbons 2 and 7. This is Loline biosynthesis cluster 1 transcription factor lolU1 from Epichloe uncinata (Endophyte fungus).